A 482-amino-acid chain; its full sequence is tRNA sulfurtransferase (482 aa).

One can recognise a THUMP domain in the interval 61–165 (VQICDALTRI…QDVLILVKAR (105 aa)). Residues 183–184 (LI), Lys-265, Gly-287, and Gln-296 contribute to the ATP site. A disulfide bridge connects residues Cys-344 and Cys-456. One can recognise a Rhodanese domain in the interval 404-482 (FAPTDVLLDI…GFDNVKVYRP (79 aa)). The Cysteine persulfide intermediate role is filled by Cys-456.

It belongs to the ThiI family.

The protein resides in the cytoplasm. It carries out the reaction [ThiI sulfur-carrier protein]-S-sulfanyl-L-cysteine + a uridine in tRNA + 2 reduced [2Fe-2S]-[ferredoxin] + ATP + H(+) = [ThiI sulfur-carrier protein]-L-cysteine + a 4-thiouridine in tRNA + 2 oxidized [2Fe-2S]-[ferredoxin] + AMP + diphosphate. It catalyses the reaction [ThiS sulfur-carrier protein]-C-terminal Gly-Gly-AMP + S-sulfanyl-L-cysteinyl-[cysteine desulfurase] + AH2 = [ThiS sulfur-carrier protein]-C-terminal-Gly-aminoethanethioate + L-cysteinyl-[cysteine desulfurase] + A + AMP + 2 H(+). Its pathway is cofactor biosynthesis; thiamine diphosphate biosynthesis. Its function is as follows. Catalyzes the ATP-dependent transfer of a sulfur to tRNA to produce 4-thiouridine in position 8 of tRNAs, which functions as a near-UV photosensor. Also catalyzes the transfer of sulfur to the sulfur carrier protein ThiS, forming ThiS-thiocarboxylate. This is a step in the synthesis of thiazole, in the thiamine biosynthesis pathway. The sulfur is donated as persulfide by IscS. The protein is tRNA sulfurtransferase of Photorhabdus laumondii subsp. laumondii (strain DSM 15139 / CIP 105565 / TT01) (Photorhabdus luminescens subsp. laumondii).